Consider the following 92-residue polypeptide: Large ribosomal subunit protein bL27 (92 aa).

Residues 1 to 20 (MAHKKAGGSTRNGRDSNPKY) are disordered.

Belongs to the bacterial ribosomal protein bL27 family.

The protein is Large ribosomal subunit protein bL27 of Legionella pneumophila (strain Paris).